The sequence spans 414 residues: Na(+)-translocating NADH-quinone reductase subunit B (414 aa).

4 helical membrane-spanning segments follow: residues 23–40 (WFAL…PGLV), 56–76 (IMIM…YNAG), 129–149 (FLPI…LFCM), and 164–184 (ILFA…LGIT). An FMN phosphoryl threonine modification is found at Thr236. The next 5 helical transmembrane spans lie at 268 to 288 (IPGS…AMIV), 297 to 317 (IIAG…VIGS), 322 to 342 (MFSM…GMFF), 358 to 378 (WWYG…NPAY), and 381 to 401 (GMML…HLVV).

This sequence belongs to the NqrB/RnfD family. In terms of assembly, composed of six subunits; NqrA, NqrB, NqrC, NqrD, NqrE and NqrF. FMN serves as cofactor.

Its subcellular location is the cell inner membrane. The enzyme catalyses a ubiquinone + n Na(+)(in) + NADH + H(+) = a ubiquinol + n Na(+)(out) + NAD(+). Its function is as follows. NQR complex catalyzes the reduction of ubiquinone-1 to ubiquinol by two successive reactions, coupled with the transport of Na(+) ions from the cytoplasm to the periplasm. NqrA to NqrE are probably involved in the second step, the conversion of ubisemiquinone to ubiquinol. The polypeptide is Na(+)-translocating NADH-quinone reductase subunit B (Vibrio vulnificus (strain CMCP6)).